Here is a 475-residue protein sequence, read N- to C-terminus: Tubulin gamma chain (475 aa).

Position 142-148 (Ala-142–Gly-148) interacts with GTP. The tract at residues Gly-455–Ser-475 is disordered.

This sequence belongs to the tubulin family.

Its subcellular location is the cytoplasm. It is found in the cytoskeleton. The protein resides in the microtubule organizing center. Tubulin is the major constituent of microtubules. The gamma chain is found at microtubule organizing centers (MTOC) such as the spindle poles, suggesting that it is involved in the minus-end nucleation of microtubule assembly. The chain is Tubulin gamma chain (TUBG1) from Physcomitrium patens (Spreading-leaved earth moss).